Consider the following 319-residue polypeptide: ATP-dependent 6-phosphofructokinase (319 aa).

Residue Gly-11 participates in ATP binding. 21 to 25 serves as a coordination point for ADP; the sequence is RAVVR. ATP-binding positions include 72–73 and 102–105; these read RC and GDGS. Position 103 (Asp-103) interacts with Mg(2+). A substrate-binding site is contributed by 125–127; the sequence is TID. Residue Asp-127 is the Proton acceptor of the active site. ADP is bound at residue Arg-154. Residues Arg-162 and 169-171 each bind substrate; that span reads MGR. ADP-binding positions include 185–187, Lys-211, and 213–215; these read GAE and KMH. Residues Glu-222, Arg-243, and 249 to 252 contribute to the substrate site; that span reads HIQR.

The protein belongs to the phosphofructokinase type A (PFKA) family. ATP-dependent PFK group I subfamily. Prokaryotic clade 'B1' sub-subfamily. In terms of assembly, homotetramer. Mg(2+) is required as a cofactor.

The protein localises to the cytoplasm. It carries out the reaction beta-D-fructose 6-phosphate + ATP = beta-D-fructose 1,6-bisphosphate + ADP + H(+). The protein operates within carbohydrate degradation; glycolysis; D-glyceraldehyde 3-phosphate and glycerone phosphate from D-glucose: step 3/4. With respect to regulation, allosterically activated by ADP and other diphosphonucleosides, and allosterically inhibited by phosphoenolpyruvate. Catalyzes the phosphorylation of D-fructose 6-phosphate to fructose 1,6-bisphosphate by ATP, the first committing step of glycolysis. The protein is ATP-dependent 6-phosphofructokinase of Clostridium botulinum (strain 657 / Type Ba4).